Here is a 459-residue protein sequence, read N- to C-terminus: Plasma alpha-L-fucosidase (459 aa).

The N-terminal stretch at 1 to 23 is a signal peptide; that stretch reads MRLGLLMFLPLLLLATRYRAVTA. Residues N163 and N231 are each glycosylated (N-linked (GlcNAc...) asparagine). Phosphoserine is present on S293. The N-linked (GlcNAc...) asparagine glycan is linked to N369.

This sequence belongs to the glycosyl hydrolase 29 family. As to quaternary structure, homotetramer.

The protein localises to the secreted. It catalyses the reaction an alpha-L-fucoside + H2O = L-fucose + an alcohol. In terms of biological role, alpha-L-fucosidase is responsible for hydrolyzing the alpha-1,6-linked fucose joined to the reducing-end N-acetylglucosamine of the carbohydrate moieties of glycoproteins. The sequence is that of Plasma alpha-L-fucosidase (Fuca2) from Rattus norvegicus (Rat).